The chain runs to 189 residues: uncharacterized protein (189 aa).

The next 4 membrane-spanning stretches (helical) occupy residues 49–69, 78–98, 102–122, and 124–144; these read LLGILKLITFPVLCAAGLFVF, LFHKSFQGCSGYVLATFLSLF, LTIVGIVSCITWAPGFIFPMI, and VSIAFATVETCFQIYTHLFPA. Positions 165–189 are disordered; sequence SSSAPDLNYPSLPTQSASPSQRFSA.

It belongs to the chlamydial CPn_0442/CT_006/TC_0274 family.

It is found in the cell membrane. This is an uncharacterized protein from Chlamydia trachomatis serovar D (strain ATCC VR-885 / DSM 19411 / UW-3/Cx).